A 154-amino-acid polypeptide reads, in one-letter code: MALSLYLIAVICSLVGFTASQQTCDNDNRFCFPNVVANWIGAAEYCSRNGWRLAVLDSEQKQQQVEELAQRVDAFKTAKVELWIGASDLAREGKFMWHPTGLDVSYSKWIAGMPDNKDGYEHCVHLWYEPSRLINWHWNDVVCASMRRFVCEQA.

The first 20 residues, 1–20 (MALSLYLIAVICSLVGFTAS), serve as a signal peptide directing secretion. The 126-residue stretch at 27–152 (DNRFCFPNVV…CASMRRFVCE (126 aa)) folds into the C-type lectin domain. 2 cysteine pairs are disulfide-bonded: cysteine 46-cysteine 151 and cysteine 123-cysteine 143.

In terms of assembly, (Microbial infection) Interacts with non-structural protein 1 of dengue virus type 2. Interacts with envelope protein E of dengue virus type 2. As to expression, female salivary gland (at protein level). Not detected in female carcass without salivary glands (at protein level). Not detected in male tissues (at protein level).

It localises to the secreted. Putative lectin. May have a regulatory role in mosquito immunity. Probably suppresses replication of dengue virus type 2 in mosquito salivary glands. The polypeptide is C-type lectin 16 (Aedes aegypti (Yellowfever mosquito)).